We begin with the raw amino-acid sequence, 592 residues long: Glutamine--fructose-6-phosphate aminotransferase [isomerizing] (592 aa).

Residue cysteine 2 is the Nucleophile; for GATase activity of the active site. Residues 2–217 (CGIVGYVGRD…DGEIADLTPD (216 aa)) form the Glutamine amidotransferase type-2 domain. SIS domains are found at residues 277 to 416 (IPFK…EREN) and 441 to 582 (VAEK…VDQP). Lysine 587 acts as the For Fru-6P isomerization activity in catalysis.

As to quaternary structure, homodimer.

The protein localises to the cytoplasm. The catalysed reaction is D-fructose 6-phosphate + L-glutamine = D-glucosamine 6-phosphate + L-glutamate. Functionally, catalyzes the first step in hexosamine metabolism, converting fructose-6P into glucosamine-6P using glutamine as a nitrogen source. In Aquifex aeolicus (strain VF5), this protein is Glutamine--fructose-6-phosphate aminotransferase [isomerizing].